A 104-amino-acid polypeptide reads, in one-letter code: Small ribosomal subunit protein uS10 (104 aa).

This sequence belongs to the universal ribosomal protein uS10 family. In terms of assembly, part of the 30S ribosomal subunit.

Its function is as follows. Involved in the binding of tRNA to the ribosomes. In Helicobacter pylori (strain P12), this protein is Small ribosomal subunit protein uS10.